Reading from the N-terminus, the 228-residue chain is Cytidylate kinase (228 aa).

Residue 17 to 25 (GPTASGKGT) coordinates ATP.

Belongs to the cytidylate kinase family. Type 1 subfamily.

The protein localises to the cytoplasm. It catalyses the reaction CMP + ATP = CDP + ADP. The enzyme catalyses dCMP + ATP = dCDP + ADP. The chain is Cytidylate kinase from Burkholderia multivorans (strain ATCC 17616 / 249).